The following is a 221-amino-acid chain: Probable molybdenum cofactor guanylyltransferase (221 aa).

GTP is bound by residues 17-19 (LAG), lysine 29, aspartate 74, and aspartate 103. Mg(2+) is bound at residue aspartate 103.

This sequence belongs to the MobA family. Mg(2+) is required as a cofactor.

The protein localises to the cytoplasm. The enzyme catalyses Mo-molybdopterin + GTP + H(+) = Mo-molybdopterin guanine dinucleotide + diphosphate. In terms of biological role, transfers a GMP moiety from GTP to Mo-molybdopterin (Mo-MPT) cofactor (Moco or molybdenum cofactor) to form Mo-molybdopterin guanine dinucleotide (Mo-MGD) cofactor. In Peptoclostridium acidaminophilum (Eubacterium acidaminophilum), this protein is Probable molybdenum cofactor guanylyltransferase.